A 339-amino-acid chain; its full sequence is Deoxyguanosinetriphosphate triphosphohydrolase-like protein (339 aa).

The region spanning 75-186 (RLTHTLEVAQ…VQISDKIAYI (112 aa)) is the HD domain.

This sequence belongs to the dGTPase family. Type 2 subfamily.

The chain is Deoxyguanosinetriphosphate triphosphohydrolase-like protein from Caldanaerobacter subterraneus subsp. tengcongensis (strain DSM 15242 / JCM 11007 / NBRC 100824 / MB4) (Thermoanaerobacter tengcongensis).